Consider the following 332-residue polypeptide: Glycerol-3-phosphate dehydrogenase [NAD(P)+] (332 aa).

Tryptophan 13, lysine 34, and lysine 108 together coordinate NADPH. Residues lysine 108, glycine 136, and serine 138 each contribute to the sn-glycerol 3-phosphate site. NADPH is bound at residue alanine 140. Residues lysine 191, aspartate 244, serine 254, arginine 255, and asparagine 256 each contribute to the sn-glycerol 3-phosphate site. Catalysis depends on lysine 191, which acts as the Proton acceptor. Residue arginine 255 coordinates NADPH. Residues valine 279 and glutamate 281 each contribute to the NADPH site.

Belongs to the NAD-dependent glycerol-3-phosphate dehydrogenase family.

The protein localises to the cytoplasm. The enzyme catalyses sn-glycerol 3-phosphate + NAD(+) = dihydroxyacetone phosphate + NADH + H(+). It carries out the reaction sn-glycerol 3-phosphate + NADP(+) = dihydroxyacetone phosphate + NADPH + H(+). Its pathway is membrane lipid metabolism; glycerophospholipid metabolism. Catalyzes the reduction of the glycolytic intermediate dihydroxyacetone phosphate (DHAP) to sn-glycerol 3-phosphate (G3P), the key precursor for phospholipid synthesis. The chain is Glycerol-3-phosphate dehydrogenase [NAD(P)+] from Francisella tularensis subsp. tularensis (strain FSC 198).